The following is a 260-amino-acid chain: MLAIISPAKTLDFETPAPNFPFANSQPKLTAYSQQLIDICKQFSPAELGSLMSISDKLASLNVARFAEWQLEHNEQNSKAALFAFKGDVYTGLDAETLTQAQVEYARVHLRMLSGLYGLLKPLDLMQPYRLEMGTKLVNPKGKDLYAFWGDIITQHLQTAMDEQGDNILVNLASDEYYGAVKPQKLQATIIKPVFLDEKNGKFKQISFYAKKARGMMVRFILETQPTSVEQLKAFNYGSYWFDEDASGATELVFKREEQA.

This sequence belongs to the UPF0246 family.

The chain is UPF0246 protein APL_0602 from Actinobacillus pleuropneumoniae serotype 5b (strain L20).